The chain runs to 291 residues: uncharacterized protein (291 aa).

Residues 1-82 (MEAEKETEQE…SYSSSPFETH (82 aa)) form a disordered region. 2 stretches are compositionally biased toward low complexity: residues 28–43 (HSHS…ISAS) and 59–78 (STSS…SSSP).

This is an uncharacterized protein from Arabidopsis thaliana (Mouse-ear cress).